Consider the following 435-residue polypeptide: Serine--tRNA ligase (435 aa).

241 to 243 is an L-serine binding site; the sequence is TAE. 272-274 lines the ATP pocket; the sequence is RAE. Glu-295 is a binding site for L-serine. Residue 359–362 participates in ATP binding; sequence EISS. Residue Ser-395 coordinates L-serine.

Belongs to the class-II aminoacyl-tRNA synthetase family. Type-1 seryl-tRNA synthetase subfamily. In terms of assembly, homodimer. The tRNA molecule binds across the dimer.

The protein resides in the cytoplasm. The catalysed reaction is tRNA(Ser) + L-serine + ATP = L-seryl-tRNA(Ser) + AMP + diphosphate + H(+). It catalyses the reaction tRNA(Sec) + L-serine + ATP = L-seryl-tRNA(Sec) + AMP + diphosphate + H(+). Its pathway is aminoacyl-tRNA biosynthesis; selenocysteinyl-tRNA(Sec) biosynthesis; L-seryl-tRNA(Sec) from L-serine and tRNA(Sec): step 1/1. Catalyzes the attachment of serine to tRNA(Ser). Is also able to aminoacylate tRNA(Sec) with serine, to form the misacylated tRNA L-seryl-tRNA(Sec), which will be further converted into selenocysteinyl-tRNA(Sec). This is Serine--tRNA ligase from Haemophilus ducreyi (strain 35000HP / ATCC 700724).